The sequence spans 261 residues: Serine acetyltransferase (261 aa).

This sequence belongs to the transferase hexapeptide repeat family.

It is found in the cytoplasm. It carries out the reaction L-serine + acetyl-CoA = O-acetyl-L-serine + CoA. Its pathway is amino-acid biosynthesis; L-cysteine biosynthesis; L-cysteine from L-serine: step 1/2. This is Serine acetyltransferase (cysE) from Buchnera aphidicola subsp. Schizaphis graminum (strain Sg).